A 927-amino-acid chain; its full sequence is MTSKMEFTDRAKKALEDAMALAEQYAHSQLLPVHLAVALLDPLPDPSKDQQNAPAGATSSLFRQVIERAHGDPQLFDRALKKALVRLPSQDPPPDHVSMAPSFHTVLRKANELQKTQKDTYIAVDHLITALAEEPSIMNALKEANIPKPKLVTDAIQAIRGTKRVDSRNADTEEEHENLAKFTIDMTAMAREGKIDPVIGREEEIRRVIRILSRRTKNNPVLIGEPGVGKTTVVEGLAQRIVNADVPDNLANCKLLSLDVGALVAGSKYRGEFEERMKGVLKEISESKEMIILFIDEIHLLMGAGASGEGGMDAANLLKPMLARGQLHCIGATTLAEYRKYIEKDAAFERRFQQVIVKEPSVSETISILRGLKEKYEVHHGVTISDAAIVAAANLAARYLTSRRLPDSAIDLIDEAAAAVRVARESQPEIIDSLERKLRQLKIEIHALSREKDEASKARLEQAKKDAENVEEELRPLREKYEQEKQRAKALQEARMKLESLRQKAEEASRMGDHSRAADLQYYAIPEQEAVIKRLEKEKAAADAALNAAAAETGGAMITDVVGPDQINEIVARWTGIPVTRLKTSEKEKLLHMEKHLSKIVVGQKEAVQSVSNAIRLQRSGLSNPNQPPSFLFCGPSGTGKTLLTKALAEFLFDDPKAMIRFDMSEYQERHSLSRMIGAPPGYVGHDSGGQLTEALRRKPFSILLFDEVEKAAKEVLTVLLQLMDDGRITDGQGRVVDARNCIVVMTSNLGAEYLSRPNAKDGKIDPTTRELVMNALRNYFLPEFLNRISSIVIFNRLTRREIRKIVELRIAEIQKRLQDNDRNVKIEVSEEAKDKLGALGYSPAYGARPLQRVLEKEVLNRLAVLILRGSIRDGEVARVVVQDGKITVLPNHPEVNDEDDEMMLDEEDAVDEVAPESEMDEDLYDD.

The region spanning 2–162 (TSKMEFTDRA…TDAIQAIRGT (161 aa)) is the Clp R domain. Repeat stretches follow at residues 7-87 (FTDR…LVRL) and 99-162 (MAPS…IRGT). The NBD1 stretch occupies residues 179–428 (LAKFTIDMTA…AVRVARESQP (250 aa)). An ATP-binding site is contributed by 224-231 (GEPGVGKT). Positions 429-553 (EIIDSLERKL…AALNAAAAET (125 aa)) form a coiled coil. A disordered region spans residues 454 to 473 (EASKARLEQAKKDAENVEEE). Residues 562–752 (VGPDQINEIV…IVVMTSNLGA (191 aa)) are NBD2. 635–642 (GPSGTGKT) is an ATP binding site. The tract at residues 908–927 (EDAVDEVAPESEMDEDLYDD) is disordered.

It belongs to the ClpA/ClpB family. Homohexamer, forming a ring with a central pore.

Its subcellular location is the cytoplasm. It is found in the nucleus. Its function is as follows. Required, in concert with Hsp40 and Hsp70 and small Hsps, for the dissociation, resolubilization and refolding of aggregates of damaged proteins after heat or other environmental stresses. Extracts proteins from aggregates by unfolding and threading them in an ATP-dependent process through the axial channel of the protein hexamer, after which they can be refolded by components of the Hsp70/Hsp40 chaperone system. The polypeptide is Heat shock protein hsp98 (hsp98) (Neurospora crassa (strain ATCC 24698 / 74-OR23-1A / CBS 708.71 / DSM 1257 / FGSC 987)).